The following is a 953-amino-acid chain: Ubiquitin carboxyl-terminal hydrolase CYLD (953 aa).

Residues 106-590 (CEERLSLFRN…LEIMIGKKKG (485 aa)) are interaction with TRIP. 2 CAP-Gly domains span residues 153 to 198 (LAER…VFVA) and 253 to 286 (DVLP…VQLC). Residues 318 to 350 (FMSRGVGDKGSSSHNKPKVTGSTSDPGSRNRSE) are disordered. Residues 327 to 346 (GSSSHNKPKVTGSTSDPGSR) show a composition bias toward polar residues. Serine 384 is subject to Phosphoserine. A disordered region spans residues 387-410 (EMSSDFGHSSPPPQPPSMNSLSSE). The tract at residues 391–466 (DFGHSSPPPQ…MPSSSGNAHG (76 aa)) is interaction with TRAF2. 2 positions are modified to phosphoserine: serine 415 and serine 419. The tract at residues 467–681 (LEVGSLAEVK…FTSEEKDPEE (215 aa)) is interaction with IKBKG/NEMO. One can recognise a CAP-Gly 3 domain in the interval 489-532 (GQPPGLSDVLAGLELEDECAGCTDGTFRGTRYFTCALKKALFVK). The region spanning 589–947 (KGIQGHYNSC…DAYMCMYQSP (359 aa)) is the USP domain. Catalysis depends on cysteine 598, which acts as the Nucleophile. Residues 778–830 (LEDTPRQCRICGGLAMYECRECYDDPDISAGKIKQFCKTCSTQVHLHPRRLNH) are B-box. Zn(2+) contacts are provided by cysteine 785, cysteine 788, cysteine 796, cysteine 799, cysteine 814, cysteine 817, histidine 822, and histidine 830. Histidine 868 acts as the Proton acceptor in catalysis.

This sequence belongs to the peptidase C19 family. As to quaternary structure, interacts (via CAP-Gly domain) with IKBKG/NEMO (via proline-rich C-terminal region). Interacts with TRAF2 and TRIP. Interacts with PLK1, DVL1, DVL3, MAVS, TBK1, IKKE and RIGI. Interacts (via CAP-Gly domain) with microtubules. Interacts with HDAC6 and BCL3. Interacts with MAP3K7. Identified in a complex with TRAF6 and SQSTM1. Interacts with OPTN and SQSTM1. Interacts with CEP350. Interacts with RNF31; the interaction is indirect and is mediated via SPATA2. Interacts with SPATA2 (via the PUB domain); the interaction is direct and recruits CYLD to the LUBAC complex, thereby regulating TNF-alpha-induced necroptosis. Post-translationally, phosphorylated on several serine residues by IKKA and/or IKKB in response to immune stimuli. Phosphorylation requires IKBKG. Phosphorylation abolishes TRAF2 deubiquitination, interferes with the activation of Jun kinases, and strongly reduces CD40-dependent gene activation by NF-kappa-B. In terms of processing, ubiquitinated. Polyubiquitinated in hepatocytes treated with palmitic acid. Ubiquitination is mediated by E3 ligase TRIM47 and leads to proteasomal degradation.

The protein resides in the cytoplasm. It is found in the perinuclear region. It localises to the cytoskeleton. Its subcellular location is the cell membrane. The protein localises to the microtubule organizing center. The protein resides in the centrosome. It is found in the spindle. It localises to the cilium basal body. The catalysed reaction is Thiol-dependent hydrolysis of ester, thioester, amide, peptide and isopeptide bonds formed by the C-terminal Gly of ubiquitin (a 76-residue protein attached to proteins as an intracellular targeting signal).. In terms of biological role, deubiquitinase that specifically cleaves 'Lys-63'- and linear 'Met-1'-linked polyubiquitin chains and is involved in NF-kappa-B activation and TNF-alpha-induced necroptosis. Negatively regulates NF-kappa-B activation by deubiquitinating upstream signaling factors. Contributes to the regulation of cell survival, proliferation and differentiation via its effects on NF-kappa-B activation. Negative regulator of Wnt signaling. Inhibits HDAC6 and thereby promotes acetylation of alpha-tubulin and stabilization of microtubules. Plays a role in the regulation of microtubule dynamics, and thereby contributes to the regulation of cell proliferation, cell polarization, cell migration, and angiogenesis. Required for normal cell cycle progress and normal cytokinesis. Inhibits nuclear translocation of NF-kappa-B. Plays a role in the regulation of inflammation and the innate immune response, via its effects on NF-kappa-B activation. Dispensable for the maturation of intrathymic natural killer cells, but required for the continued survival of immature natural killer cells. Negatively regulates TNFRSF11A signaling and osteoclastogenesis. Involved in the regulation of ciliogenesis, allowing ciliary basal bodies to migrate and dock to the plasma membrane; this process does not depend on NF-kappa-B activation. Ability to remove linear ('Met-1'-linked) polyubiquitin chains regulates innate immunity and TNF-alpha-induced necroptosis: recruited to the LUBAC complex via interaction with SPATA2 and restricts linear polyubiquitin formation on target proteins. Regulates innate immunity by restricting linear polyubiquitin formation on RIPK2 in response to NOD2 stimulation. Involved in TNF-alpha-induced necroptosis by removing linear ('Met-1'-linked) polyubiquitin chains from RIPK1, thereby regulating the kinase activity of RIPK1. Negatively regulates intestinal inflammation by removing 'Lys-63' linked polyubiquitin chain of NLRP6, thereby reducing the interaction between NLRP6 and PYCARD/ASC and formation of the NLRP6 inflammasome. Does not catalyze deubiquitination of heterotypic 'Lys-63'-/'Lys-48'-linked branched ubiquitin chains. Removes 'Lys-63' linked polyubiquitin chain of MAP3K7, which inhibits phosphorylation and blocks downstream activation of the JNK-p38 kinase cascades. Also removes 'Lys-63'-linked polyubiquitin chains of MAP3K1 and MA3P3K3, which inhibit their interaction with MAP2K1 and MAP2K2. This chain is Ubiquitin carboxyl-terminal hydrolase CYLD (Cyld), found in Rattus norvegicus (Rat).